We begin with the raw amino-acid sequence, 131 residues long: Protein TAP2 (131 aa).

The first 22 residues, 1-22 (MAKSSPTYTVLFLLGLLALSTA), serve as a signal peptide directing secretion. The interval 75–101 (ARSGGETDVKKMEGSMPDQGKTAGRDQ) is disordered.

As to expression, tapetum of anthers.

The polypeptide is Protein TAP2 (TAP2) (Antirrhinum majus (Garden snapdragon)).